We begin with the raw amino-acid sequence, 480 residues long: 2-succinylbenzoate--CoA ligase (480 aa).

The protein belongs to the ATP-dependent AMP-binding enzyme family. MenE subfamily.

It carries out the reaction 2-succinylbenzoate + ATP + CoA = 2-succinylbenzoyl-CoA + AMP + diphosphate. It functions in the pathway quinol/quinone metabolism; 1,4-dihydroxy-2-naphthoate biosynthesis; 1,4-dihydroxy-2-naphthoate from chorismate: step 5/7. The protein operates within quinol/quinone metabolism; menaquinone biosynthesis. Converts 2-succinylbenzoate (OSB) to 2-succinylbenzoyl-CoA (OSB-CoA). The chain is 2-succinylbenzoate--CoA ligase from Oceanobacillus iheyensis (strain DSM 14371 / CIP 107618 / JCM 11309 / KCTC 3954 / HTE831).